An 857-amino-acid polypeptide reads, in one-letter code: Protein translocase subunit SecA (857 aa).

ATP is bound by residues Q88, 106-110, and D496; that span reads GEGKT. 4 residues coordinate Zn(2+): C833, C835, C844, and C845.

It belongs to the SecA family. In terms of assembly, monomer and homodimer. Part of the essential Sec protein translocation apparatus which comprises SecA, SecYEG and auxiliary proteins SecDF-YajC and YidC. Zn(2+) is required as a cofactor.

Its subcellular location is the cell inner membrane. It localises to the cytoplasm. It catalyses the reaction ATP + H2O + cellular proteinSide 1 = ADP + phosphate + cellular proteinSide 2.. Functionally, part of the Sec protein translocase complex. Interacts with the SecYEG preprotein conducting channel. Has a central role in coupling the hydrolysis of ATP to the transfer of proteins into and across the cell membrane, serving as an ATP-driven molecular motor driving the stepwise translocation of polypeptide chains across the membrane. This chain is Protein translocase subunit SecA, found in Sulfurimonas denitrificans (strain ATCC 33889 / DSM 1251) (Thiomicrospira denitrificans (strain ATCC 33889 / DSM 1251)).